A 377-amino-acid polypeptide reads, in one-letter code: Succinyl-diaminopimelate desuccinylase 2 (377 aa).

His62 is a Zn(2+) binding site. Residue Asp64 is part of the active site. Position 95 (Asp95) interacts with Zn(2+). Glu129 acts as the Proton acceptor in catalysis. 3 residues coordinate Zn(2+): Glu130, Glu158, and His350.

This sequence belongs to the peptidase M20A family. DapE subfamily. Homodimer. It depends on Zn(2+) as a cofactor. Requires Co(2+) as cofactor.

It catalyses the reaction N-succinyl-(2S,6S)-2,6-diaminopimelate + H2O = (2S,6S)-2,6-diaminopimelate + succinate. It participates in amino-acid biosynthesis; L-lysine biosynthesis via DAP pathway; LL-2,6-diaminopimelate from (S)-tetrahydrodipicolinate (succinylase route): step 3/3. Functionally, catalyzes the hydrolysis of N-succinyl-L,L-diaminopimelic acid (SDAP), forming succinate and LL-2,6-diaminopimelate (DAP), an intermediate involved in the bacterial biosynthesis of lysine and meso-diaminopimelic acid, an essential component of bacterial cell walls. This Shewanella loihica (strain ATCC BAA-1088 / PV-4) protein is Succinyl-diaminopimelate desuccinylase 2.